Reading from the N-terminus, the 436-residue chain is Trigger factor (436 aa).

Disordered regions lie at residues 1 to 26 (MQVS…RVEN) and 81 to 100 (QESL…TGEG). In terms of domain architecture, PPIase FKBP-type spans 161–246 (EDRVVIDFHG…VKRVEEPQLP (86 aa)).

This sequence belongs to the FKBP-type PPIase family. Tig subfamily.

Its subcellular location is the cytoplasm. It catalyses the reaction [protein]-peptidylproline (omega=180) = [protein]-peptidylproline (omega=0). Functionally, involved in protein export. Acts as a chaperone by maintaining the newly synthesized protein in an open conformation. Functions as a peptidyl-prolyl cis-trans isomerase. In Halorhodospira halophila (strain DSM 244 / SL1) (Ectothiorhodospira halophila (strain DSM 244 / SL1)), this protein is Trigger factor.